The sequence spans 307 residues: MGSLKPWARYLLLLMAHLLAMGLGAVVLQALEGPPARHLQAQVQAELASFQAEHRACLPPEALEELLGAVLRAQAHGVSSLGNSSETSNWDLPSALLFTASILTTTGYGHMAPLSSGGKAFCVVYAALGLPASLALVAALRHCLLPVFSRPGDWVAIRWQLAPAQAALLQAAGLGLLVACVFMLLPALVLWGVQGDCSLLEAIYFCFGSLSTIGLGDLLPAHGRGLHPAIYHLGQFALLGYLLLGLLAMLLAVETFSELPQVRAMVKFFGPSGSRTDEDQDGILGQDELALSTVLPDAPVLGPTTPA.

Over 1 to 10 the chain is Cytoplasmic; it reads MGSLKPWARY. Residues 11–31 form a helical membrane-spanning segment; that stretch reads LLLLMAHLLAMGLGAVVLQAL. N-linked (GlcNAc...) asparagine glycosylation is present at asparagine 83. The pore-forming intramembrane region spans 92–118; sequence LPSALLFTASILTTTGYGHMAPLSSGG. The helical transmembrane segment at 120–140 threads the bilayer; sequence AFCVVYAALGLPASLALVAAL. Over 141–172 the chain is Cytoplasmic; sequence RHCLLPVFSRPGDWVAIRWQLAPAQAALLQAA. The helical transmembrane segment at 173–193 threads the bilayer; that stretch reads GLGLLVACVFMLLPALVLWGV. The segment at residues 199–227 is an intramembrane region (pore-forming); that stretch reads LLEAIYFCFGSLSTIGLGDLLPAHGRGLH. Residues 233 to 253 form a helical membrane-spanning segment; the sequence is LGQFALLGYLLLGLLAMLLAV. At 254–307 the chain is on the cytoplasmic side; it reads ETFSELPQVRAMVKFFGPSGSRTDEDQDGILGQDELALSTVLPDAPVLGPTTPA.

The protein belongs to the two pore domain potassium channel (TC 1.A.1.8) family. As to quaternary structure, homodimer. As to expression, detected in embryo, eye, lung and liver. Weakly expressed in colon, testis, atria, kidney, intestine, bladder, uterus, ovary, salivary gland, thymus and brain stem. Not detected in brain, cerebellum, spinal cord, heart, ventricle, skeletal muscle, liver, placenta and pancreas. In the eye, highly expressed in the retinal ganglion cell layer and inner nuclear layer.

The protein resides in the membrane. In terms of biological role, probable potassium channel subunit. No channel activity observed in vitro as protein remains in the endoplasmic reticulum. May need to associate with an as yet unknown partner in order to reach the plasma membrane. The chain is Potassium channel subfamily K member 7 (Kcnk7) from Mus musculus (Mouse).